A 258-amino-acid polypeptide reads, in one-letter code: MDGGSGGPYTSRTAEEVFRDFRGRRAGMIKALTTDVEKFYQLCDPEKENLCLYGYPNETWEVTLPAEEVPPEIPEPALGINFARDGMNEKDWLALVAVHSDSWLLAVAFYFAARFGFDKEARRRLFNMINNLPTIFEVVTGAAKKQTKEKAPNSTNKPNKPSSKMQPRPESHSKAPKPPAPPKDDDESGDEYADEEEEERDNTLCGSCGTNDGKDEFWICCDSCERWYHGKCVKITPARAEHIKHYKCPDCGNKRARA.

Residues 143 to 205 (AKKQTKEKAP…EEEERDNTLC (63 aa)) are disordered. Residues 152 to 165 (PNSTNKPNKPSSKM) show a composition bias toward polar residues. The span at 184-200 (DDDESGDEYADEEEEER) shows a compositional bias: acidic residues. A PHD-type zinc finger spans residues 202–254 (NTLCGSCGTNDGKDEFWICCDSCERWYHGKCVKITPARAEHIKHYKCPDCGNK).

The protein belongs to the Alfin family.

The protein resides in the nucleus. Its function is as follows. Histone-binding component that specifically recognizes H3 tails trimethylated on 'Lys-4' (H3K4me3), which mark transcription start sites of virtually all active genes. The protein is PHD finger protein ALFIN-LIKE 5 of Oryza sativa subsp. indica (Rice).